Here is a 254-residue protein sequence, read N- to C-terminus: UstYa family oxidase phomYc' (254 aa).

The chain crosses the membrane as a helical span at residues 38–58 (LVLVLQSVLIISLLASLHILG). Asparagine 64 carries N-linked (GlcNAc...) asparagine glycosylation. The HXXHC 1 signature appears at 138 to 142 (HQLHC). A glycan (N-linked (GlcNAc...) asparagine) is linked at asparagine 159. Positions 173-177 (HIDHC) match the HXXHC 2 motif.

The protein belongs to the ustYa family.

It is found in the membrane. Its pathway is mycotoxin biosynthesis. Its function is as follows. UstYa family oxidase; part of the gene cluster that mediates the biosynthesis of the phomopsins, a group of hexapeptide mycotoxins which infects lupins and causes lupinosis disease in livestock. Within the pathway, phomYc' catalyzes the desaturation of the Ile moiety into 2,3-dehydroisoleucine (dIle). The pathway starts with the processing of the precursor phomA' by several endopeptidases including kexin proteases as well as the cluster-specific S41 family peptidase phomP1 and the oligopeptidase phomG' to produce 10 identical copies of the hexapeptide Tyr-Val-Ile-Pro-Ile-Asp. After being excised from the precursor peptide, the core peptides are cyclized and modified post-translationally by enzymes encoded within the gene cluster. The timing and order of proteolysis of the phomA' precursor and PTMs are still unknown. Two tyrosinase-like enzymes, phomQ1' and phomQ2, catalyze the chlorination and hydroxylation of Tyr, respectively. PhomYb, is proposed to be involved in the construction of the macrocyclic structure. The other 4 ustYa family proteins may be involved in PTMs that generate the unique structure of phomopsin A. PhomYa' is required for the hydroxylation of C-beta of Tyr. PhomYc', phomYd', and phomYe are responsible for the biosynthesis of 2,3-dehydroisoleucine (dIle), 2,3-dehydroaspartic acid (dAsp), and 3,4-dehydroproline (dPro), respectively. While dIle formation by phomYc' is indispensable for the installation of dAsp by phomYd', the order of the other PTMs have not been elucidated yet. Most of the biosynthetic enzymes likely have broad substrate specificity, and thus, there might be a metabolic grid from a precursor to phomopsin A. The enzyme(s) responsible for the biosynthesis of 3,4-dehydrovaline (dVal) have also not been identified yet. Finally, phomM' acts as an S-adenosylmethionine-dependent alpha-N-methyltransferase that catalyzes two successive N-methylation reactions, converting N-desmethyl-phomopsin A to phomopsin A and phomopsin A further to an N,N-dimethylated congener called phomopsin E. In Diaporthe leptostromiformis (Lupinosis disease fungus), this protein is UstYa family oxidase phomYc'.